The following is a 53-amino-acid chain: UPF0391 membrane protein Bxeno_A2958 (53 aa).

The next 2 membrane-spanning stretches (helical) occupy residues 5 to 25 (AIVF…GIAA) and 30 to 50 (IAKI…LLGV).

The protein belongs to the UPF0391 family.

It localises to the cell membrane. This Paraburkholderia xenovorans (strain LB400) protein is UPF0391 membrane protein Bxeno_A2958.